We begin with the raw amino-acid sequence, 60 residues long: Protein BNLF2a (60 aa).

Residues 14–26 (SSACGLPGSSTET) are compositionally biased toward polar residues. Residues 14–34 (SSACGLPGSSTETRPSHPCPE) are disordered. Residues 41–59 (LRLLLVVLCVLFGLLCLLL) form a helical membrane-spanning segment.

The protein belongs to the lymphocryptovirus BNLF2a family. In terms of assembly, interacts with host TAP1 and TAP2.

It is found in the host endoplasmic reticulum membrane. In terms of biological role, participates in viral evasion from HLA class I-restricted T-cell immunity. Associates with host TAP1 and TAP2 and prevents TAP-mediated peptide transport and subsequent loading. The polypeptide is Protein BNLF2a (Homo sapiens (Human)).